The primary structure comprises 53 residues: Putative defensin-like protein 53 (53 aa).

Cystine bridges form between cysteine 12/cysteine 51, cysteine 16/cysteine 40, cysteine 26/cysteine 49, and cysteine 30/cysteine 50.

It belongs to the DEFL family.

This is Putative defensin-like protein 53 from Arabidopsis thaliana (Mouse-ear cress).